The chain runs to 45 residues: Conotoxin reg3.12 (45 aa).

A propeptide spanning residues 1 to 31 (DQPVERHAGNKRHLNPTIRRAMIIDANRREK) is cleaved from the precursor. 3 cysteine pairs are disulfide-bonded: cysteine 32–cysteine 44, cysteine 33–cysteine 42, and cysteine 38–cysteine 45.

The protein belongs to the conotoxin M superfamily. As to expression, expressed by the venom duct.

The protein localises to the secreted. In Conus regius (Crown cone), this protein is Conotoxin reg3.12.